Here is a 359-residue protein sequence, read N- to C-terminus: MPKQIEPVALDDAGSALVIVDQTLIPNETRYLRLTTPEETWEAIRSLRVRGAPAIGIAAAMGLYLGVKGSEAADFEDFYHEFRQVKAYLASARPTAVNLFWALDRMEACLLRHRDRPIPEIKEALRAEAEAIREEDARANRTIGEYALSLLKPGMGILTHCNAGALATAAYGTALAPIYLGQERGYNFRVFADETRPLLQGARLTAYELMQAGVDVTLICDNMASAVMKNGWVDAVFVGCDRVAANGDTANKIGTSGVAILARHYGIPFYVCAPTSTIDLRCPTGADIVIEERRPEEVTEQWYAKRMAPEGVKVYNPAFDVTDADLITAIITEYGIARPPYTESLKELFRRKEEAERRA.

Substrate is bound by residues 50–52 (RGA), R93, and Q200. D241 functions as the Proton donor in the catalytic mechanism. 251 to 252 (NK) provides a ligand contact to substrate.

The protein belongs to the eIF-2B alpha/beta/delta subunits family. MtnA subfamily.

The enzyme catalyses 5-(methylsulfanyl)-alpha-D-ribose 1-phosphate = 5-(methylsulfanyl)-D-ribulose 1-phosphate. It participates in amino-acid biosynthesis; L-methionine biosynthesis via salvage pathway; L-methionine from S-methyl-5-thio-alpha-D-ribose 1-phosphate: step 1/6. Its function is as follows. Catalyzes the interconversion of methylthioribose-1-phosphate (MTR-1-P) into methylthioribulose-1-phosphate (MTRu-1-P). In Symbiobacterium thermophilum (strain DSM 24528 / JCM 14929 / IAM 14863 / T), this protein is Methylthioribose-1-phosphate isomerase.